The chain runs to 397 residues: Probable transport protein MmpL6 (397 aa).

Transmembrane regions (helical) follow at residues 190–210, 214–234, 242–262, 293–313, and 328–348; these read YDLL…MMII, LVAA…SFGL, LLGI…LLAV, TGGV…SFVF, and LGLL…IAVL.

This sequence belongs to the resistance-nodulation-cell division (RND) (TC 2.A.6) family. MmpL subfamily.

Its subcellular location is the cell membrane. The sequence is that of Probable transport protein MmpL6 (mmpL6) from Mycobacterium tuberculosis (strain CDC 1551 / Oshkosh).